Reading from the N-terminus, the 302-residue chain is Cardiolipin synthase (CMP-forming) (302 aa).

Positions 65–84 are disordered; it reads PRTHCSGAGKAAPEPAAGGD. Over residues 71–84 the composition is skewed to low complexity; that stretch reads GAGKAAPEPAAGGD. 5 helical membrane-spanning segments follow: residues 109–129, 133–153, 190–212, 250–270, and 271–289; these read IPNL…YLIL, FNVA…DGFI, IPVP…VFYV, LILV…SIYL, and QILW…YSYY.

It belongs to the CDP-alcohol phosphatidyltransferase class-I family. A divalent metal cation serves as cofactor.

It is found in the mitochondrion inner membrane. It catalyses the reaction a CDP-1,2-diacyl-sn-glycerol + a 1,2-diacyl-sn-glycero-3-phospho-(1'-sn-glycerol) = a cardiolipin + CMP + H(+). Its function is as follows. Catalyzes the synthesis of cardiolipin (CL) (diphosphatidylglycerol) by specifically transferring a phosphatidyl group from CDP-diacylglycerol to phosphatidylglycerol (PG). CL is a key phospholipid in mitochondrial membranes and plays important roles in maintaining the functional integrity and dynamics of mitochondria under both optimal and stress conditions. The polypeptide is Cardiolipin synthase (CMP-forming) (Crls1) (Rattus norvegicus (Rat)).